Reading from the N-terminus, the 1243-residue chain is Serine/threonine-protein kinase WNK4 (1243 aa).

Residues Met1–Glu17 show a composition bias toward polar residues. Residues Met1 to Val142 form a disordered region. Positions Val65–Ala77 are enriched in low complexity. Residues Ser78–Lys103 show a composition bias toward pro residues. The residue at position 97 (Ser97) is a Phosphoserine. Positions Ala118 to Leu127 are enriched in basic and acidic residues. Glycyl lysine isopeptide (Lys-Gly) (interchain with G-Cter in ubiquitin) cross-links involve residues Lys157 and Lys175. Residues Leu174–Phe432 form the Protein kinase domain. Ser184 serves as a coordination point for ATP. Residues Lys186, Lys226, and Lys241 each participate in a glycyl lysine isopeptide (Lys-Gly) (interchain with G-Cter in ubiquitin) cross-link. Residues Thr254–Met257 and Lys304 contribute to the ATP site. The active-site Proton acceptor is Asp321. Lys328 participates in a covalent cross-link: Glycyl lysine isopeptide (Lys-Gly) (interchain with G-Cter in ubiquitin). Phosphoserine; by autocatalysis occurs at positions 331 and 335. Glycyl lysine isopeptide (Lys-Gly) (interchain with G-Cter in ubiquitin) cross-links involve residues Lys387, Lys393, Lys450, and Lys454. The interval Lys526 to Asp564 is disordered. Positions Pro534–Pro556 are enriched in pro residues. The tract at residues Glu557–Gln567 is interaction with KLHL3. Ser575 carries the phosphoserine modification. Residues Ser630–Ser641 are compositionally biased toward low complexity. Disordered regions lie at residues Ser630–Asp683, Asp751–Glu871, and Ser943–Trp1110. Positions Pro663–Leu676 are enriched in basic residues. Residues Glu767–Asp780 show a composition bias toward pro residues. Low complexity predominate over residues Trp797–Ser812. Pro residues predominate over residues Pro822–Phe843. 3 stretches are compositionally biased toward low complexity: residues Ser844–Pro854, Pro862–Glu871, and Ser943–Ser952. Residues Pro953–Ala970 show a composition bias toward pro residues. Lys1010 is covalently cross-linked (Glycyl lysine isopeptide (Lys-Gly) (interchain with G-Cter in ubiquitin)). Positions Arg1016–Val1019 match the RFXV motif motif. Residue Ser1035 is modified to Phosphoserine. Basic and acidic residues predominate over residues Glu1065–Ala1077. Glycyl lysine isopeptide (Lys-Gly) (interchain with G-Cter in ubiquitin) cross-links involve residues Lys1144, Lys1157, and Lys1158. The disordered stretch occupies residues Arg1166–Met1243. 2 stretches are compositionally biased toward polar residues: residues Ser1193–Arg1204 and Asn1216–Gln1228. Ser1217 carries the phosphoserine modification.

The protein belongs to the protein kinase superfamily. Ser/Thr protein kinase family. WNK subfamily. In terms of assembly, interacts with the C-terminal region of KCNJ1. It depends on Mg(2+) as a cofactor. Autophosphorylated at Ser-331 and Ser-335, promoting its activation. Phosphorylated by WNK1 and WNK3. Phosphorylated at Ser-575 in a MAP3K15/ASK3-dependent process in response to osmotic stress or hypotonic low-chloride stimulation. In terms of processing, ubiquitinated by the BCR(KLHL3) complex, leading to its degradation. Also ubiquitinated by the BCR(KLHL2) complex. As to expression, expressed in kidney, colon and skin.

The protein resides in the cell junction. Its subcellular location is the tight junction. It carries out the reaction L-seryl-[protein] + ATP = O-phospho-L-seryl-[protein] + ADP + H(+). It catalyses the reaction L-threonyl-[protein] + ATP = O-phospho-L-threonyl-[protein] + ADP + H(+). With respect to regulation, activation requires autophosphorylation of Ser-331 and Ser-335. Autophosphorylation and subsequent activation is inhibited by increases in intracellular ionic strength: Cl(-) potently inhibits WNK4 kinase activity via direct binding. Also inhibited by K(+) ions. Its function is as follows. Serine/threonine-protein kinase component of the WNK4-SPAK/OSR1 kinase cascade, which acts as a key regulator of ion transport in the distal nephron and blood pressure. The WNK4-SPAK/OSR1 kinase cascade is composed of WNK4, which mediates phosphorylation and activation of downstream kinases OXSR1/OSR1 and STK39/SPAK. Following activation, OXSR1/OSR1 and STK39/SPAK catalyze phosphorylation of ion cotransporters, such as SLC12A1/NKCC2, SLC12A2/NKCC1, SLC12A3/NCC, SLC12A5/KCC2 or SLC12A6/KCC3, regulating their activity. Acts as a molecular switch that regulates the balance between renal salt reabsorption and K(+) secretion by modulating the activities of renal transporters and channels, including the Na-Cl cotransporter SLC12A3/NCC and the K(+) channel, KCNJ1/ROMK. Regulates NaCl reabsorption in the distal nephron by activating the thiazide-sensitive Na-Cl cotransporter SLC12A3/NCC in distal convoluted tubule cells of kidney: activates SLC12A3/NCC in a OXSR1/OSR1- and STK39/SPAK-dependent process. Also acts as a scaffold protein independently of its protein kinase activity: negatively regulates cell membrane localization of various transporters and channels (CFTR, KCNJ1/ROMK, SLC4A4, SLC26A9 and TRPV4) by clathrin-dependent endocytosis. Also inhibits the activity of the epithelial Na(+) channel (ENaC) SCNN1A, SCNN1B, SCNN1D in a inase-independent mechanism. May also phosphorylate NEDD4L. The protein is Serine/threonine-protein kinase WNK4 of Homo sapiens (Human).